The primary structure comprises 130 residues: Small ribosomal subunit protein uS11 (130 aa).

This sequence belongs to the universal ribosomal protein uS11 family. Part of the 30S ribosomal subunit. Interacts with proteins S7 and S18. Binds to IF-3.

Functionally, located on the platform of the 30S subunit, it bridges several disparate RNA helices of the 16S rRNA. Forms part of the Shine-Dalgarno cleft in the 70S ribosome. The protein is Small ribosomal subunit protein uS11 of Prochlorococcus marinus (strain MIT 9301).